Consider the following 90-residue polypeptide: Small ribosomal subunit protein bS20 (90 aa).

Positions 1–21 (MANHKSALKRVRQTKKRTERN) are disordered.

Belongs to the bacterial ribosomal protein bS20 family.

Functionally, binds directly to 16S ribosomal RNA. The polypeptide is Small ribosomal subunit protein bS20 (Nitratiruptor sp. (strain SB155-2)).